The sequence spans 616 residues: GDP-Man:Man(3)GlcNAc(2)-PP-Dol alpha-1,2-mannosyltransferase (616 aa).

Position 1 (Met1) is a topological domain, lumenal. A helical membrane pass occupies residues 2–21; that stretch reads GYLVVIGVIACVAYGILQVV. Topologically, residues 22–199 are cytoplasmic; the sequence is STVLPRLLLV…RLIDGDYWKR (178 aa). Residues 200–220 constitute an intramembrane region (helical); sequence FTLIGQLFGSMVLSWEAMFEL. The Cytoplasmic segment spans residues 221–460; it reads SPDVWIDTIG…FGLNAMWNEH (240 aa). An intramembrane region (helical) is located at residues 461–481; sequence FGIGVVEYMSRGVIPLCHASA. The Cytoplasmic segment spans residues 482-616; the sequence is GPLLDIVTNW…ERRSGIEKVY (135 aa).

The protein belongs to the glycosyltransferase group 1 family.

It is found in the endoplasmic reticulum membrane. The enzyme catalyses an alpha-D-Man-(1-&gt;3)-[alpha-D-Man-(1-&gt;6)]-beta-D-Man-(1-&gt;4)-beta-D-GlcNAc-(1-&gt;4)-alpha-D-GlcNAc-diphospho-di-trans,poly-cis-dolichol + 2 GDP-alpha-D-mannose = an alpha-D-Man-(1-&gt;2)-alpha-D-Man-(1-&gt;2)-alpha-D-Man-(1-&gt;3)-[alpha-D-Man-(1-&gt;6)]-beta-D-Man-(1-&gt;4)-beta-D-GlcNAc-(1-&gt;4)-alpha-D-GlcNAc-diphospho-di-trans,poly-cis-dolichol + 2 GDP + 2 H(+). It functions in the pathway protein modification; protein glycosylation. GDP-Man:Man(3)GlcNAc(2)-PP-Dol alpha-1,2-mannosyltransferase that operates in the biosynthetic pathway of dolichol-linked oligosaccharides, the glycan precursors employed in protein asparagine (N)-glycosylation. The assembly of dolichol-linked oligosaccharides begins on the cytosolic side of the endoplasmic reticulum membrane and finishes in its lumen. The sequential addition of sugars to dolichol pyrophosphate produces dolichol-linked oligosaccharides containing fourteen sugars, including two GlcNAcs, nine mannoses and three glucoses. Once assembled, the oligosaccharide is transferred from the lipid to nascent proteins by oligosaccharyltransferases. Catalyzes, on the cytoplasmic face of the endoplasmic reticulum, the addition of the fourth and fifth mannose residues to the dolichol-linked oligosaccharide chain, to produce Man(5)GlcNAc(2)-PP-dolichol core oligosaccharide. The sequence is that of GDP-Man:Man(3)GlcNAc(2)-PP-Dol alpha-1,2-mannosyltransferase (ALG11) from Debaryomyces hansenii (strain ATCC 36239 / CBS 767 / BCRC 21394 / JCM 1990 / NBRC 0083 / IGC 2968) (Yeast).